The primary structure comprises 406 residues: Argininosuccinate synthase (406 aa).

An ATP-binding site is contributed by 8 to 16 (AYSGGLDTS). Tyr86 provides a ligand contact to L-citrulline. Position 116 (Gly116) interacts with ATP. Residues Thr118, Asn122, and Asp123 each coordinate L-aspartate. Residue Asn122 coordinates L-citrulline. Residues Arg126, Ser174, Ser183, Glu259, and Tyr271 each contribute to the L-citrulline site.

It belongs to the argininosuccinate synthase family. Type 1 subfamily. In terms of assembly, homotetramer.

It localises to the cytoplasm. The enzyme catalyses L-citrulline + L-aspartate + ATP = 2-(N(omega)-L-arginino)succinate + AMP + diphosphate + H(+). Its pathway is amino-acid biosynthesis; L-arginine biosynthesis; L-arginine from L-ornithine and carbamoyl phosphate: step 2/3. This chain is Argininosuccinate synthase, found in Dehalococcoides mccartyi (strain ATCC BAA-2100 / JCM 16839 / KCTC 5957 / BAV1).